A 442-amino-acid polypeptide reads, in one-letter code: Trigger factor (442 aa).

Positions 165-250 (DDRVIIDFEG…LQKVMAPELP (86 aa)) constitute a PPIase FKBP-type domain.

It belongs to the FKBP-type PPIase family. Tig subfamily.

The protein localises to the cytoplasm. The enzyme catalyses [protein]-peptidylproline (omega=180) = [protein]-peptidylproline (omega=0). Its function is as follows. Involved in protein export. Acts as a chaperone by maintaining the newly synthesized protein in an open conformation. Functions as a peptidyl-prolyl cis-trans isomerase. The chain is Trigger factor from Coxiella burnetii (strain CbuG_Q212) (Coxiella burnetii (strain Q212)).